The primary structure comprises 118 residues: Small ribosomal subunit protein uS13 (118 aa).

Residues 94-118 are disordered; sequence GLPVRGQRTRTNARTRKGPRKAIKK.

Belongs to the universal ribosomal protein uS13 family. As to quaternary structure, part of the 30S ribosomal subunit. Forms a loose heterodimer with protein S19. Forms two bridges to the 50S subunit in the 70S ribosome.

In terms of biological role, located at the top of the head of the 30S subunit, it contacts several helices of the 16S rRNA. In the 70S ribosome it contacts the 23S rRNA (bridge B1a) and protein L5 of the 50S subunit (bridge B1b), connecting the 2 subunits; these bridges are implicated in subunit movement. Contacts the tRNAs in the A and P-sites. The sequence is that of Small ribosomal subunit protein uS13 from Thiobacillus denitrificans (strain ATCC 25259 / T1).